The following is a 464-amino-acid chain: Asparagine--tRNA ligase (464 aa).

It belongs to the class-II aminoacyl-tRNA synthetase family. In terms of assembly, homodimer.

Its subcellular location is the cytoplasm. It carries out the reaction tRNA(Asn) + L-asparagine + ATP = L-asparaginyl-tRNA(Asn) + AMP + diphosphate + H(+). In Xanthomonas euvesicatoria pv. vesicatoria (strain 85-10) (Xanthomonas campestris pv. vesicatoria), this protein is Asparagine--tRNA ligase.